A 163-amino-acid chain; its full sequence is uncharacterized protein (163 aa).

The Cytoplasmic portion of the chain corresponds to 1 to 33; the sequence is MKTLDKITNYDLFDFADEFLKFVPVFRPNPTVT. A helical membrane pass occupies residues 34–54; that stretch reads CLFGNPLTNLLVNGTGAACFF. The Extracellular portion of the chain corresponds to 55–117; that stretch reads EFCSLALIKV…SLGMALPDDD (63 aa). The helical transmembrane segment at 118-138 threads the bilayer; the sequence is VLLSITFWFLCNSSFSILFVF. The Cytoplasmic segment spans residues 139 to 163; the sequence is ELRIFLRTVNNLLVVFLSVLKRNDL.

The protein localises to the membrane. This is an uncharacterized protein from Saccharomyces cerevisiae (strain ATCC 204508 / S288c) (Baker's yeast).